A 347-amino-acid chain; its full sequence is Queuosine 5'-phosphate N-glycosylase/hydrolase (347 aa).

The queuine site is built by histidine 53, phenylalanine 237, aspartate 239, aspartate 321, and aspartate 326. Catalysis depends on aspartate 239, which acts as the Nucleophile or transition state stabilizer.

It belongs to the QNG1 protein family.

It catalyses the reaction queuosine 5'-phosphate + H2O = queuine + D-ribose 5-phosphate. Catalyzes the hydrolysis of queuosine 5'-phosphate, releasing the nucleobase queuine (q). Is required for salvage of queuine from exogenous queuosine (Q) that is imported and then converted to queuosine 5'-phosphate intracellularly. In Nematostella vectensis (Starlet sea anemone), this protein is Queuosine 5'-phosphate N-glycosylase/hydrolase.